The chain runs to 652 residues: DNA ligase (652 aa).

Residues 29-33 (DAEYD), 78-79 (SL), and Glu107 each bind NAD(+). Lys109 functions as the N6-AMP-lysine intermediate in the catalytic mechanism. 4 residues coordinate NAD(+): Arg130, Glu164, Lys278, and Lys302. Zn(2+) is bound by residues Cys395, Cys398, Cys413, and Cys418. The BRCT domain maps to 577-652 (DENAALSGMT…IKDEAWLESL (76 aa)).

The protein belongs to the NAD-dependent DNA ligase family. LigA subfamily. Requires Mg(2+) as cofactor. The cofactor is Mn(2+).

It catalyses the reaction NAD(+) + (deoxyribonucleotide)n-3'-hydroxyl + 5'-phospho-(deoxyribonucleotide)m = (deoxyribonucleotide)n+m + AMP + beta-nicotinamide D-nucleotide.. Functionally, DNA ligase that catalyzes the formation of phosphodiester linkages between 5'-phosphoryl and 3'-hydroxyl groups in double-stranded DNA using NAD as a coenzyme and as the energy source for the reaction. It is essential for DNA replication and repair of damaged DNA. The polypeptide is DNA ligase (Streptococcus suis (strain 98HAH33)).